The sequence spans 415 residues: Probable tRNA pseudouridine synthase D (415 aa).

Residue aspartate 83 is the Nucleophile of the active site. One can recognise a TRUD domain in the interval 158–378 (GFPNYFGYQR…PGRRRELLIR (221 aa)).

Belongs to the pseudouridine synthase TruD family.

The enzyme catalyses uridine(13) in tRNA = pseudouridine(13) in tRNA. Its function is as follows. Could be responsible for synthesis of pseudouridine from uracil-13 in transfer RNAs. The sequence is that of Probable tRNA pseudouridine synthase D from Thermococcus gammatolerans (strain DSM 15229 / JCM 11827 / EJ3).